A 256-amino-acid polypeptide reads, in one-letter code: NAD-dependent protein deacylase 2 (256 aa).

The Deacetylase sirtuin-type domain maps to Met1–Arg256. Residues Gly25 to Tyr44 and Gln108 to Asp111 contribute to the NAD(+) site. The Proton acceptor role is filled by His128. The Zn(2+) site is built by Cys136, Cys139, Cys158, and Cys161. NAD(+)-binding positions include Gly199 to Thr201, Asn225 to Gly227, and Ala243.

The protein belongs to the sirtuin family. Class III subfamily. Zn(2+) is required as a cofactor.

The protein resides in the cytoplasm. The catalysed reaction is N(6)-acetyl-L-lysyl-[protein] + NAD(+) + H2O = 2''-O-acetyl-ADP-D-ribose + nicotinamide + L-lysyl-[protein]. In terms of biological role, NAD-dependent protein deacetylase which modulates the activities of several proteins which are inactive in their acetylated form. The polypeptide is NAD-dependent protein deacylase 2 (cobB2) (Pseudomonas aeruginosa (strain ATCC 15692 / DSM 22644 / CIP 104116 / JCM 14847 / LMG 12228 / 1C / PRS 101 / PAO1)).